The chain runs to 371 residues: Bifunctional enzyme IspD/IspF (371 aa).

The tract at residues 1-210 (MSEISLIMLA…LDLPTPSFEI (210 aa)) is 2-C-methyl-D-erythritol 4-phosphate cytidylyltransferase. Residues 211-371 (FTGNGFDVHE…NLKYFDWTRL (161 aa)) are 2-C-methyl-D-erythritol 2,4-cyclodiphosphate synthase. Aspartate 217 and histidine 219 together coordinate a divalent metal cation. Residues 217–219 (DVH) and 243–244 (HS) each bind 4-CDP-2-C-methyl-D-erythritol 2-phosphate. Histidine 251 lines the a divalent metal cation pocket. Residues 265–267 (DIG), 270–274 (YPDTD), 341–344 (TTTE), phenylalanine 348, and arginine 351 each bind 4-CDP-2-C-methyl-D-erythritol 2-phosphate.

The protein in the N-terminal section; belongs to the IspD/TarI cytidylyltransferase family. IspD subfamily. This sequence in the C-terminal section; belongs to the IspF family. It depends on a divalent metal cation as a cofactor.

It catalyses the reaction 2-C-methyl-D-erythritol 4-phosphate + CTP + H(+) = 4-CDP-2-C-methyl-D-erythritol + diphosphate. The enzyme catalyses 4-CDP-2-C-methyl-D-erythritol 2-phosphate = 2-C-methyl-D-erythritol 2,4-cyclic diphosphate + CMP. The protein operates within isoprenoid biosynthesis; isopentenyl diphosphate biosynthesis via DXP pathway; isopentenyl diphosphate from 1-deoxy-D-xylulose 5-phosphate: step 2/6. Its pathway is isoprenoid biosynthesis; isopentenyl diphosphate biosynthesis via DXP pathway; isopentenyl diphosphate from 1-deoxy-D-xylulose 5-phosphate: step 4/6. Its function is as follows. Bifunctional enzyme that catalyzes the formation of 4-diphosphocytidyl-2-C-methyl-D-erythritol from CTP and 2-C-methyl-D-erythritol 4-phosphate (MEP) (IspD), and catalyzes the conversion of 4-diphosphocytidyl-2-C-methyl-D-erythritol 2-phosphate (CDP-ME2P) to 2-C-methyl-D-erythritol 2,4-cyclodiphosphate (ME-CPP) with a corresponding release of cytidine 5-monophosphate (CMP) (IspF). This Campylobacter jejuni subsp. jejuni serotype O:6 (strain 81116 / NCTC 11828) protein is Bifunctional enzyme IspD/IspF.